The primary structure comprises 347 residues: Terpene synthase 2 (347 aa).

Residues Asp-103, Asn-247, Ser-251, and Glu-255 each coordinate Mg(2+). Positions Asp-103–Glu-107 match the D(D/E)XX(D/E) motif motif. The NSE motif motif lies at Asn-247–Glu-255. The WxxxxxRY motif motif lies at Trp-329–Tyr-336.

This sequence belongs to the terpene synthase family. The cofactor is Mg(2+).

Its function is as follows. Terpene synthase that may be involved in the production of volatile terpenoids. Does not show detectable terpene products with either farnesyl diphosphate (FPP) or geranyl diphosphate (GPP). P.polycephalum has a unique biology and these volatile terpenoids could function in internal communication of P.polycephalum, to mark the territory that have been explored, or they may be involved in chemotaxis. The polypeptide is Terpene synthase 2 (Physarum polycephalum (Slime mold)).